We begin with the raw amino-acid sequence, 245 residues long: Eukaryotic translation initiation factor 6 (245 aa).

Belongs to the eIF-6 family. Monomer. Associates with the 60S ribosomal subunit.

The protein localises to the cytoplasm. The protein resides in the nucleus. Its subcellular location is the nucleolus. Functionally, binds to the 60S ribosomal subunit and prevents its association with the 40S ribosomal subunit to form the 80S initiation complex in the cytoplasm. May also be involved in ribosome biogenesis. This Drosophila melanogaster (Fruit fly) protein is Eukaryotic translation initiation factor 6.